We begin with the raw amino-acid sequence, 558 residues long: Potassium-transporting ATPase potassium-binding subunit 1 (558 aa).

12 helical membrane passes run 1–21 (MEII…SGYL), 66–86 (FNGF…WLFL), 127–147 (MIVM…VCIA), 166–186 (IVRF…ILLM), 245–265 (IWSN…MLFL), 281–301 (ALIL…LTMW), 327–347 (FGAG…TGSV), 354–374 (LTPI…VFGG), 377–397 (VGLM…SLMV), 416–436 (IVLV…LAFM), 482–502 (ISTG…QLMI), and 531–551 (IVFI…LGPI).

Belongs to the KdpA family. As to quaternary structure, the system is composed of three essential subunits: KdpA, KdpB and KdpC.

The protein localises to the cell membrane. Functionally, part of the high-affinity ATP-driven potassium transport (or Kdp) system, which catalyzes the hydrolysis of ATP coupled with the electrogenic transport of potassium into the cytoplasm. This subunit binds the extracellular potassium ions and delivers the ions to the membrane domain of KdpB through an intramembrane tunnel. In Staphylococcus aureus (strain Mu50 / ATCC 700699), this protein is Potassium-transporting ATPase potassium-binding subunit 1.